Here is a 245-residue protein sequence, read N- to C-terminus: tRNA pseudouridine synthase A 2 (245 aa).

D53 (nucleophile) is an active-site residue. Y111 is a substrate binding site.

This sequence belongs to the tRNA pseudouridine synthase TruA family. Homodimer.

The catalysed reaction is uridine(38/39/40) in tRNA = pseudouridine(38/39/40) in tRNA. Functionally, formation of pseudouridine at positions 38, 39 and 40 in the anticodon stem and loop of transfer RNAs. This is tRNA pseudouridine synthase A 2 from Bacillus anthracis.